Consider the following 444-residue polypeptide: Probable D-serine dehydratase (444 aa).

Lys-118 is modified (N6-(pyridoxal phosphate)lysine).

The protein belongs to the serine/threonine dehydratase family. DsdA subfamily. Requires pyridoxal 5'-phosphate as cofactor.

The catalysed reaction is D-serine = pyruvate + NH4(+). The polypeptide is Probable D-serine dehydratase (Acinetobacter baumannii (strain ACICU)).